A 259-amino-acid chain; its full sequence is BTB/POZ domain-containing protein KCTD4 (259 aa).

Residues 1–25 (MERKINRREKEKEYEGKHNSLEDTD) form a disordered region. One can recognise a BTB domain in the interval 33–134 (TLMTLNVGGY…EVKSRWEKEQ (102 aa)).

This chain is BTB/POZ domain-containing protein KCTD4 (KCTD4), found in Homo sapiens (Human).